A 493-amino-acid chain; its full sequence is Glutamyl-tRNA(Gln) amidotransferase subunit A (493 aa).

Catalysis depends on charge relay system residues lysine 81 and serine 156. The active-site Acyl-ester intermediate is serine 180.

The protein belongs to the amidase family. GatA subfamily. In terms of assembly, heterotrimer of A, B and C subunits.

It carries out the reaction L-glutamyl-tRNA(Gln) + L-glutamine + ATP + H2O = L-glutaminyl-tRNA(Gln) + L-glutamate + ADP + phosphate + H(+). Its function is as follows. Allows the formation of correctly charged Gln-tRNA(Gln) through the transamidation of misacylated Glu-tRNA(Gln) in organisms which lack glutaminyl-tRNA synthetase. The reaction takes place in the presence of glutamine and ATP through an activated gamma-phospho-Glu-tRNA(Gln). The sequence is that of Glutamyl-tRNA(Gln) amidotransferase subunit A from Mycolicibacterium paratuberculosis (strain ATCC BAA-968 / K-10) (Mycobacterium paratuberculosis).